A 124-amino-acid polypeptide reads, in one-letter code: Seripauperin-3 (124 aa).

A helical transmembrane segment spans residues 7 to 24 (IAAGVAAIAAGIAAAPAT).

This sequence belongs to the SRP1/TIP1 family. Seripauperin subfamily.

It localises to the membrane. This Saccharomyces cerevisiae (strain ATCC 204508 / S288c) (Baker's yeast) protein is Seripauperin-3 (PAU3).